A 260-amino-acid polypeptide reads, in one-letter code: Lysine/arginine/ornithine-binding periplasmic protein (260 aa).

The N-terminal stretch at 1–22 is a signal peptide; the sequence is MKKSILALSLLVGLSTAASSYA. D33 serves as a coordination point for L-arginine. An L-lysine-binding site is contributed by D33. An L-ornithine-binding site is contributed by D33. C60 and C67 are oxidised to a cystine. L-arginine is bound by residues S91, S92, S94, R99, T143, and D183. L-ornithine-binding residues include S91, S92, S94, R99, T143, and D183. Positions 92, 94, 99, and 143 each coordinate L-lysine.

This sequence belongs to the bacterial solute-binding protein 3 family. The complex is composed of two ATP-binding proteins (HisP), two transmembrane proteins (HisM and HisQ) and a solute-binding protein (ArgT).

The protein resides in the periplasm. Its function is as follows. Part of the ABC transporter complex HisPMQ-ArgT involved in lysine/arginine/ornithine transport. Binds lysine, arginine and ornithine. Stimulates ATPase activity of HisP. This chain is Lysine/arginine/ornithine-binding periplasmic protein (argT), found in Escherichia coli (strain K12).